The following is a 798-amino-acid chain: Transferrin receptor protein 2 (798 aa).

Residues 1-81 (MEQRWGLLRK…WAAAGRKAAP (81 aa)) are Cytoplasmic-facing. The Endocytosis signal signature appears at 23–26 (YRRV). The tract at residues 25 to 44 (RVEGPQLENLEEEDREEGEE) is disordered. A compositionally biased stretch (acidic residues) spans 33 to 44 (NLEEEDREEGEE). The chain crosses the membrane as a helical; Signal-anchor for type II membrane protein span at residues 82–102 (YLVLTTLLIFTGAFLLGYVAF). The Extracellular portion of the chain corresponds to 103–798 (RGSCQACGDS…GDVWNIDNNF (696 aa)). N-linked (GlcNAc...) asparagine glycosylation is found at N235, N334, and N535.

Belongs to the peptidase M28 family. M28B subfamily. As to quaternary structure, homodimer.

It is found in the cell membrane. Functionally, mediates cellular uptake of transferrin-bound iron in a non-iron dependent manner. May be involved in iron metabolism, hepatocyte function and erythrocyte differentiation. The protein is Transferrin receptor protein 2 (Tfr2) of Rattus norvegicus (Rat).